Reading from the N-terminus, the 309-residue chain is uncharacterized protein (309 aa).

Residues 23-43 form a helical membrane-spanning segment; sequence ALVLSSIVNILLLLLIYSTVF.

It belongs to the chlamydial CPn_0593/CT_474/TC_0759 family.

It localises to the membrane. This is an uncharacterized protein from Chlamydia trachomatis serovar D (strain ATCC VR-885 / DSM 19411 / UW-3/Cx).